The sequence spans 203 residues: Gramillins biosynthetic cluster protein FGSG_00038 (203 aa).

Its pathway is mycotoxin biosynthesis. Functionally, part of the gene cluster that mediates the biosynthesis of gramillins A and B, bicyclic lipopeptides that induce cell death in maize leaves but not in wheat leaves. The nonribosomal peptide synthetase GRA1 incorporates respectively a glutamic adic (Glu), a leucine (Leu), a serine (Ser), a hydroxyglutamine (HOGln), a 2-amino decanoic acid, and 2 cysteins (CysB and CysA). The biosynthesis of 2-amino decanoic acid incorporated in gramillins could be initiated by a fatty acid synthase composed of the alpha and beta subunits FGSG_00036 and FGSG_11656. The cytochrome P450 monooxygenase FGSG_15680 could hydroxylate the fatty acid chain. Subsequent oxidation to the ketone by the oxidoreductase FGSG_00048 and transamination by aminotransferase FGSG_00049 could form 2-amino-decanoic acid. On the other hand, FGSG_15680 could also be responsible for the HO-modified glutamine at the gamma-position. Whether hydroxylation occurs on the fully assembled product or on the Gln residue prior to assembly into the gramillins requires further proof. The thioredoxin FGSG_00043 could also be required for the disulfide-bond formation between CysA and CysB. The specific involvement of the remaining proteins from the cluster is more difficult to discern, but could have broader regulatory (FGSG_00040 and FGSG_11657) or enzymatic functions (FGSG_00044 and FGSG_00045). The final C-domain of GRA1 does not possess the expected sequence of a termination CT domain, often implicated in macrocyclization and release of a cyclopeptidein fungal NRPs; and the thioesterase FGSG_00047 may act in concert with the terminal C-domain of GRA1 to catalyze the formation of the macrocyclic anhydride and release of the products. In Gibberella zeae (strain ATCC MYA-4620 / CBS 123657 / FGSC 9075 / NRRL 31084 / PH-1) (Wheat head blight fungus), this protein is Gramillins biosynthetic cluster protein FGSG_00038.